Consider the following 414-residue polypeptide: Lipoyl synthase, mitochondrial (414 aa).

A mitochondrion-targeting transit peptide spans 1-31; the sequence is MAVSTSHFRSLCASRPLSRTAIVGHISCRSY. Positions 31–51 are disordered; the sequence is YATTEPSPSATSTSTTTTARR. The segment covering 32–48 has biased composition (low complexity); it reads ATTEPSPSATSTSTTTT. Positions 131, 136, 142, 162, 166, 169, and 377 each coordinate [4Fe-4S] cluster. Positions 145–366 constitute a Radical SAM core domain; that stretch reads GSDKSAATAT…RQRALDMGFL (222 aa).

This sequence belongs to the radical SAM superfamily. Lipoyl synthase family. The cofactor is [4Fe-4S] cluster.

It localises to the mitochondrion. It catalyses the reaction [[Fe-S] cluster scaffold protein carrying a second [4Fe-4S](2+) cluster] + N(6)-octanoyl-L-lysyl-[protein] + 2 oxidized [2Fe-2S]-[ferredoxin] + 2 S-adenosyl-L-methionine + 4 H(+) = [[Fe-S] cluster scaffold protein] + N(6)-[(R)-dihydrolipoyl]-L-lysyl-[protein] + 4 Fe(3+) + 2 hydrogen sulfide + 2 5'-deoxyadenosine + 2 L-methionine + 2 reduced [2Fe-2S]-[ferredoxin]. It participates in protein modification; protein lipoylation via endogenous pathway; protein N(6)-(lipoyl)lysine from octanoyl-[acyl-carrier-protein]: step 2/2. Its function is as follows. Catalyzes the radical-mediated insertion of two sulfur atoms into the C-6 and C-8 positions of the octanoyl moiety bound to the lipoyl domains of lipoate-dependent enzymes, thereby converting the octanoylated domains into lipoylated derivatives. The polypeptide is Lipoyl synthase, mitochondrial (Aspergillus fumigatus (strain CBS 144.89 / FGSC A1163 / CEA10) (Neosartorya fumigata)).